Reading from the N-terminus, the 519-residue chain is Cytosol aminopeptidase (519 aa).

Ser42 bears the Phosphoserine mark. Position 45 is an N6-succinyllysine (Lys45). Phosphoserine is present on Ser54. Lys61 and Lys103 each carry N6-succinyllysine. Ser180 and Ser194 each carry phosphoserine. The Zn(2+) site is built by Leu202, Met203, and Thr205. Residue Ser238 is modified to Phosphoserine. Zn(2+) contacts are provided by Lys282 and Asp287. Substrate-binding residues include Lys282, Asp287, Ser292, and Lys294. Residue Asp287 participates in Mg(2+) binding. The active site involves Lys294. Residues Arg303, Asp305, Asp364, and Glu366 each contribute to the Zn(2+) site. Residues Asp305 and Asp364 each contribute to the substrate site. Residues Asp364 and Glu366 each coordinate Mg(2+). Residue Arg368 is part of the active site. Lys455 carries the N6-acetyllysine; alternate modification. N6-succinyllysine; alternate is present on Lys455. Residue Lys476 is modified to N6-succinyllysine. Position 489 is an N6-acetyllysine; alternate (Lys489). Lys489 carries the post-translational modification N6-succinyllysine; alternate.

Belongs to the peptidase M17 family. As to quaternary structure, homohexamer. Zn(2+) is required as a cofactor. It depends on Mn(2+) as a cofactor.

It is found in the cytoplasm. The catalysed reaction is Release of an N-terminal amino acid, Xaa-|-Yaa-, in which Xaa is preferably Leu, but may be other amino acids including Pro although not Arg or Lys, and Yaa may be Pro. Amino acid amides and methyl esters are also readily hydrolyzed, but rates on arylamides are exceedingly low.. The enzyme catalyses an S-substituted L-cysteinylglycine + H2O = an S-substituted L-cysteine + glycine. It carries out the reaction L-cysteinylglycine + H2O = L-cysteine + glycine. It catalyses the reaction S-benzyl-L-cysteinylglycine + H2O = S-benzyl-L-cysteine + glycine. The catalysed reaction is Release of N-terminal proline from a peptide.. With respect to regulation, zofenoprilat inhibits Cys-Gly hydrolysis activity. In terms of biological role, cytosolic metallopeptidase that catalyzes the removal of unsubstituted N-terminal hydrophobic amino acids from various peptides. The presence of Zn(2+) ions is essential for the peptidase activity, and the association with other cofactors can modulate the substrate spectificity of the enzyme. For instance, in the presence of Mn(2+), it displays a specific Cys-Gly hydrolyzing activity of Cys-Gly-S-conjugates. Involved in the metabolism of glutathione and in the degradation of glutathione S-conjugates, which may play a role in the control of the cell redox status. The polypeptide is Cytosol aminopeptidase (Bos taurus (Bovine)).